The chain runs to 107 residues: HLLQFNKMIKEETGKNAIPFYAFYGCYCGWGGSGKPKDATDRCCFEHDCCYGKLTNCNTKWDIYSYSLKDGYITCGKGTWCEKEVCECDKCLRRNLRTYKYGYMFYL.

Residues Y27, G29, and G31 each coordinate Ca(2+). Disulfide bonds link C28–C44, C43–C91, C50–C88, C57–C81, and C75–C86. H47 is an active-site residue. D48 provides a ligand contact to Ca(2+). The active site involves D89.

This sequence belongs to the phospholipase A2 family. Group II subfamily. D49 sub-subfamily. Heterodimer of A and B chains; non-covalently linked. The acidic protein (B chain) has phospholipase A2 activity and the A chain weakly inhibits the B chain enzymatic activity but potentiates its lethal potency. Expressed by the venom gland.

The protein localises to the secreted. It carries out the reaction a 1,2-diacyl-sn-glycero-3-phosphocholine + H2O = a 1-acyl-sn-glycero-3-phosphocholine + a fatty acid + H(+). Functionally, heterodimer A-B: Sphenotoxin is a potent neurotoxin that possesses phospholipase A2 (PLA2) activity. It consists of a non-covalent association of a basic PLA2 subunit B with a non-enzymatic subunit A. Monomer B: Not found in vivo. In vitro, potent neurotoxin that possesses phospholipase A2 (PLA2) activity and exerts a lethal action by blocking neuromuscular transmission. Induces paralysis of the hind legs and neuromuscular blockade in mouse phrenic nerve-diaphragm preparations. PLA2 catalyzes the calcium-dependent hydrolysis of the 2-acyl groups in 3-sn-phosphoglycerides. This is Basic phospholipase A2 sphenotoxin subunit B from Ophryacus sphenophrys (Broad-horned pitviper).